The chain runs to 341 residues: Ketol-acid reductoisomerase (NADP(+)) (341 aa).

In terms of domain architecture, KARI N-terminal Rossmann spans 1-182 (MATIYYDKDA…GCTRAGVLET (182 aa)). NADP(+) contacts are provided by residues 25-28 (YGSQ), serine 51, serine 53, and 83-86 (DQTQ). The active site involves histidine 108. Glycine 134 contacts NADP(+). Positions 183–328 (TFKEETETDL…KRLRDMMSWI (146 aa)) constitute a KARI C-terminal knotted domain. 4 residues coordinate Mg(2+): aspartate 191, glutamate 195, glutamate 227, and glutamate 231. Serine 252 is a substrate binding site.

This sequence belongs to the ketol-acid reductoisomerase family. The cofactor is Mg(2+).

It carries out the reaction (2R)-2,3-dihydroxy-3-methylbutanoate + NADP(+) = (2S)-2-acetolactate + NADPH + H(+). The catalysed reaction is (2R,3R)-2,3-dihydroxy-3-methylpentanoate + NADP(+) = (S)-2-ethyl-2-hydroxy-3-oxobutanoate + NADPH + H(+). It participates in amino-acid biosynthesis; L-isoleucine biosynthesis; L-isoleucine from 2-oxobutanoate: step 2/4. The protein operates within amino-acid biosynthesis; L-valine biosynthesis; L-valine from pyruvate: step 2/4. Involved in the biosynthesis of branched-chain amino acids (BCAA). Catalyzes an alkyl-migration followed by a ketol-acid reduction of (S)-2-acetolactate (S2AL) to yield (R)-2,3-dihydroxy-isovalerate. In the isomerase reaction, S2AL is rearranged via a Mg-dependent methyl migration to produce 3-hydroxy-3-methyl-2-ketobutyrate (HMKB). In the reductase reaction, this 2-ketoacid undergoes a metal-dependent reduction by NADPH to yield (R)-2,3-dihydroxy-isovalerate. The sequence is that of Ketol-acid reductoisomerase (NADP(+)) from Anaeromyxobacter dehalogenans (strain 2CP-C).